We begin with the raw amino-acid sequence, 162 residues long: MAASCLRPAPTASAQMMTRSPVAGLPRPCSALQRSGCTLQGAFGTFAPQTTRTFVVTWAKGGVMDAPTTTQQPASGVERSQKRPPIYKVLLHNDNYNKREYVVKVLLKVVEQITVDDAVTCMQEAHETGVALVVACPQDNAERYCEGLRLNGLTSTIEPGGC.

A chloroplast-targeting transit peptide spans 1–58 (MAASCLRPAPTASAQMMTRSPVAGLPRPCSALQRSGCTLQGAFGTFAPQTTRTFVVTW).

It belongs to the ClpS family.

It is found in the plastid. The protein localises to the chloroplast stroma. Functionally, small adapter protein that modulate the activity of plastid Clp protease system (CLPC). Probably involved in substrate selection for plastid CLPC. The sequence is that of ATP-dependent Clp protease adapter protein CLPS1, chloroplastic from Chlamydomonas reinhardtii (Chlamydomonas smithii).